The following is a 273-amino-acid chain: Phosphate import ATP-binding protein PstB (273 aa).

The ABC transporter domain occupies 27–268 (VTVRDLNFYY…PSDRRTQDYI (242 aa)). Position 59 to 66 (59 to 66 (GPSGCGKS)) interacts with ATP.

It belongs to the ABC transporter superfamily. Phosphate importer (TC 3.A.1.7) family. The complex is composed of two ATP-binding proteins (PstB), two transmembrane proteins (PstC and PstA) and a solute-binding protein (PstS).

The protein localises to the cell inner membrane. It catalyses the reaction phosphate(out) + ATP + H2O = ADP + 2 phosphate(in) + H(+). Functionally, part of the ABC transporter complex PstSACB involved in phosphate import. Responsible for energy coupling to the transport system. This Rhodopseudomonas palustris (strain ATCC BAA-98 / CGA009) protein is Phosphate import ATP-binding protein PstB.